A 214-amino-acid chain; its full sequence is Probable nicotinate-nucleotide adenylyltransferase (214 aa).

The protein belongs to the NadD family.

The enzyme catalyses nicotinate beta-D-ribonucleotide + ATP + H(+) = deamido-NAD(+) + diphosphate. It participates in cofactor biosynthesis; NAD(+) biosynthesis; deamido-NAD(+) from nicotinate D-ribonucleotide: step 1/1. Functionally, catalyzes the reversible adenylation of nicotinate mononucleotide (NaMN) to nicotinic acid adenine dinucleotide (NaAD). The polypeptide is Probable nicotinate-nucleotide adenylyltransferase (Pelodictyon phaeoclathratiforme (strain DSM 5477 / BU-1)).